Here is a 225-residue protein sequence, read N- to C-terminus: MNLTINALTRNYQGKGANRRLRRNNKIPAIVYGTGKPPSKITLDIFEITHLLKNEETYTSVLNLIVNKNKEAVIIKNLQRHPAKNSITHIDFLRINLNQSIITSIPIQFNGEEDNKAMRLGAVLNQFMTAIEISCLPTNLPHSINVDISHLTIGEHINLTDINIPKGIVITALTHGDIETHNQSIAIIQEPRKMAEIEENILVKAEDSKNKITKDNETNKDKSNL.

The tract at residues 206 to 225 is disordered; sequence EDSKNKITKDNETNKDKSNL.

It belongs to the bacterial ribosomal protein bL25 family. CTC subfamily. As to quaternary structure, part of the 50S ribosomal subunit; part of the 5S rRNA/L5/L18/L25 subcomplex. Contacts the 5S rRNA. Binds to the 5S rRNA independently of L5 and L18.

In terms of biological role, this is one of the proteins that binds to the 5S RNA in the ribosome where it forms part of the central protuberance. This chain is Large ribosomal subunit protein bL25, found in Vesicomyosocius okutanii subsp. Calyptogena okutanii (strain HA).